A 293-amino-acid polypeptide reads, in one-letter code: MELMRARAPAKINLTLRIEGRRADGFHDLASLVAFAGAGDLVFLHPDAPLALEVCGPTAAAAGPDDDNLVLRAARAFAERVPGARLGRFVLEKRLPVAAGLGGGSSDAAAALRLLAGLNGLALDDPRLFAAARATGSDVPVCLDPRARLMRGVGDVLSAPLALPPLSAVLVNCRVAVPTAGVFRALGLAPGAALAGPEHPAGLPETTMGNAAAVCAFLSGLPNDLEPPALALAPEIGRAMALLSEAPEARLVRMSGSGATVFALTDSCRTAASLARRLLAQQPGWWVKPTLLR.

Lys11 is an active-site residue. Position 96 to 106 (96 to 106 (PVAAGLGGGSS)) interacts with ATP. Asp138 is an active-site residue.

Belongs to the GHMP kinase family. IspE subfamily.

The enzyme catalyses 4-CDP-2-C-methyl-D-erythritol + ATP = 4-CDP-2-C-methyl-D-erythritol 2-phosphate + ADP + H(+). It functions in the pathway isoprenoid biosynthesis; isopentenyl diphosphate biosynthesis via DXP pathway; isopentenyl diphosphate from 1-deoxy-D-xylulose 5-phosphate: step 3/6. Functionally, catalyzes the phosphorylation of the position 2 hydroxy group of 4-diphosphocytidyl-2C-methyl-D-erythritol. The protein is 4-diphosphocytidyl-2-C-methyl-D-erythritol kinase of Xanthobacter autotrophicus (strain ATCC BAA-1158 / Py2).